Consider the following 325-residue polypeptide: Reaction center protein M chain (325 aa).

3 helical membrane passes run 54–80, 111–140, and 143–168; these read LGPL…LASV, NDGG…RARA, and MGTH…RPVL. 2 residues coordinate (7R,8Z)-bacteriochlorophyll b: H183 and H203. Residues 198–226 traverse the membrane as a helical segment; it reads FYNPFHALSIAFLYGATLLFAMHGATILA. Positions 220 and 235 each coordinate Fe cation. An a ubiquinone-binding site is contributed by W253. Residues 260–286 traverse the membrane as a helical segment; it reads NATTESIHRWAWWFAVLCPLCGGIGIL. A Fe cation-binding site is contributed by H267.

The protein belongs to the reaction center PufL/M/PsbA/D family. In terms of assembly, reaction center is composed of four bacteriochlorophylls, two bacteriopheophytins, two ubiquinones, one iron, and three highly hydrophobic polypeptide chains (designated L, M, and H).

It is found in the cell inner membrane. The reaction center is a membrane-bound complex that mediates the initial photochemical event in the electron transfer process of photosynthesis. This is Reaction center protein M chain (pufM) from Rubrivivax gelatinosus (strain NBRC 100245 / IL144).